The chain runs to 500 residues: NAD(P)H-quinone oxidoreductase chain 4, chloroplastic (500 aa).

Transmembrane regions (helical) follow at residues Phe4–Leu24, Tyr35–Phe55, Leu87–Val107, Ser111–Ser131, Leu134–Met154, Phe167–Leu187, Ile211–His231, His242–Ile262, Ala272–Ala292, Met313–Leu333, Gln334–Asp354, Leu386–Thr406, Leu417–Leu437, and Leu462–Val482.

It belongs to the complex I subunit 4 family.

The protein resides in the plastid. It is found in the chloroplast thylakoid membrane. It catalyses the reaction a plastoquinone + NADH + (n+1) H(+)(in) = a plastoquinol + NAD(+) + n H(+)(out). The catalysed reaction is a plastoquinone + NADPH + (n+1) H(+)(in) = a plastoquinol + NADP(+) + n H(+)(out). This Saccharum officinarum (Sugarcane) protein is NAD(P)H-quinone oxidoreductase chain 4, chloroplastic.